Here is a 260-residue protein sequence, read N- to C-terminus: Snake venom serine protease homolog 1 (260 aa).

An N-terminal signal peptide occupies residues 1–18 (MVLIRVLANLLLLQLSYA). Positions 19-24 (QESSEL) are excised as a propeptide. Residues 25–251 (VIGGDECDIN…YTDWIEGIIA (227 aa)) enclose the Peptidase S1 domain. Disulfide bonds link cysteine 31–cysteine 165, cysteine 52–cysteine 68, cysteine 100–cysteine 258, cysteine 144–cysteine 212, cysteine 176–cysteine 191, and cysteine 202–cysteine 227. N-linked (GlcNAc...) asparagine glycosylation is present at asparagine 253.

Belongs to the peptidase S1 family. Snake venom subfamily. Expressed by the venom gland.

It localises to the secreted. Snake venom serine protease homolog that may act in the hemostasis system of the prey. This chain is Snake venom serine protease homolog 1, found in Bitis gabonica (Gaboon adder).